The sequence spans 951 residues: Valine--tRNA ligase (951 aa).

Residues 42-52 (PNVTGSLHMGH) carry the 'HIGH' region motif. Positions 554 to 558 (KMSKS) match the 'KMSKS' region motif. Lys-557 is a binding site for ATP. Residues 880-944 (AGLINKEDEL…AEAKAKLIEQ (65 aa)) are a coiled coil.

It belongs to the class-I aminoacyl-tRNA synthetase family. ValS type 1 subfamily. Monomer.

It localises to the cytoplasm. It carries out the reaction tRNA(Val) + L-valine + ATP = L-valyl-tRNA(Val) + AMP + diphosphate. Functionally, catalyzes the attachment of valine to tRNA(Val). As ValRS can inadvertently accommodate and process structurally similar amino acids such as threonine, to avoid such errors, it has a 'posttransfer' editing activity that hydrolyzes mischarged Thr-tRNA(Val) in a tRNA-dependent manner. This chain is Valine--tRNA ligase, found in Salmonella paratyphi A (strain ATCC 9150 / SARB42).